A 289-amino-acid chain; its full sequence is 3-methyl-2-oxobutanoate hydroxymethyltransferase (289 aa).

Residues D58 and D99 each contribute to the Mg(2+) site. 3-methyl-2-oxobutanoate contacts are provided by residues D58–S59, D99, and K128. Mg(2+) is bound at residue E130. E197 functions as the Proton acceptor in the catalytic mechanism.

This sequence belongs to the PanB family. As to quaternary structure, homodecamer; pentamer of dimers. It depends on Mg(2+) as a cofactor.

The protein resides in the cytoplasm. It catalyses the reaction 3-methyl-2-oxobutanoate + (6R)-5,10-methylene-5,6,7,8-tetrahydrofolate + H2O = 2-dehydropantoate + (6S)-5,6,7,8-tetrahydrofolate. Its pathway is cofactor biosynthesis; (R)-pantothenate biosynthesis; (R)-pantoate from 3-methyl-2-oxobutanoate: step 1/2. Its function is as follows. Catalyzes the reversible reaction in which hydroxymethyl group from 5,10-methylenetetrahydrofolate is transferred onto alpha-ketoisovalerate to form ketopantoate. The polypeptide is 3-methyl-2-oxobutanoate hydroxymethyltransferase (Leptothrix cholodnii (strain ATCC 51168 / LMG 8142 / SP-6) (Leptothrix discophora (strain SP-6))).